Reading from the N-terminus, the 530-residue chain is Sensor protein kinase PilS (530 aa).

The next 6 membrane-spanning stretches (helical) occupy residues 25–37 (LTIG…LISS), 57–70 (WCYL…ALFL), 76–98 (LLPI…YAGG), 101–119 (PSGI…NILL), 124–144 (GLVI…FLSL), and 156–174 (AGGL…QALV). Residues 175 to 530 (RRQEQTETLA…ITFAHPRKLS (356 aa)) lie on the Cytoplasmic side of the membrane. Residues 196–260 (ELNALILQRM…KQWRLNPSLR (65 aa)) enclose the PAS domain. Residues 316–527 (GIAHEIRNPL…CFRITFAHPR (212 aa)) enclose the Histidine kinase domain. At H319 the chain carries Phosphohistidine; by autocatalysis.

In terms of assembly, interacts with PilA.

The protein resides in the cell inner membrane. The catalysed reaction is ATP + protein L-histidine = ADP + protein N-phospho-L-histidine.. Functionally, member of the two-component regulatory system PilS/PilR that regulates the expression of multiple genes including the type IV pilus (T4P) major subunit PilA. Thereby, plays a major role in the regulation of multiple motility pathways. Functions as a membrane-associated protein kinase that phosphorylates PilR in response to environmental signals leading to activation of specific gene promoters including the pilin gene. This is Sensor protein kinase PilS (pilS) from Pseudomonas aeruginosa (strain ATCC 15692 / DSM 22644 / CIP 104116 / JCM 14847 / LMG 12228 / 1C / PRS 101 / PAO1).